A 274-amino-acid polypeptide reads, in one-letter code: Large ribosomal subunit protein uL2 (274 aa).

The segment at 225 to 274 (MNPVDHPHGGGEGRSPIGRHPVTPWGKPTLGVKTRKKNKASSKLIIKRRK) is disordered. A compositionally biased stretch (basic residues) spans 257 to 274 (KTRKKNKASSKLIIKRRK).

The protein belongs to the universal ribosomal protein uL2 family. In terms of assembly, part of the 50S ribosomal subunit. Forms a bridge to the 30S subunit in the 70S ribosome.

Functionally, one of the primary rRNA binding proteins. Required for association of the 30S and 50S subunits to form the 70S ribosome, for tRNA binding and peptide bond formation. It has been suggested to have peptidyltransferase activity; this is somewhat controversial. Makes several contacts with the 16S rRNA in the 70S ribosome. The protein is Large ribosomal subunit protein uL2 of Carboxydothermus hydrogenoformans (strain ATCC BAA-161 / DSM 6008 / Z-2901).